A 251-amino-acid chain; its full sequence is 5'-nucleotidase SurE (251 aa).

Residues D8, D9, S42, and N94 each coordinate a divalent metal cation.

It belongs to the SurE nucleotidase family. The cofactor is a divalent metal cation.

The protein resides in the cytoplasm. It catalyses the reaction a ribonucleoside 5'-phosphate + H2O = a ribonucleoside + phosphate. Its function is as follows. Nucleotidase that shows phosphatase activity on nucleoside 5'-monophosphates. This is 5'-nucleotidase SurE from Hydrogenovibrio crunogenus (strain DSM 25203 / XCL-2) (Thiomicrospira crunogena).